Here is a 72-residue protein sequence, read N- to C-terminus: DNA-directed RNA polymerase subunit omega (72 aa).

Belongs to the RNA polymerase subunit omega family. As to quaternary structure, the RNAP catalytic core consists of 2 alpha, 1 beta, 1 beta' and 1 omega subunit. When a sigma factor is associated with the core the holoenzyme is formed, which can initiate transcription.

The catalysed reaction is RNA(n) + a ribonucleoside 5'-triphosphate = RNA(n+1) + diphosphate. Its function is as follows. Promotes RNA polymerase assembly. Latches the N- and C-terminal regions of the beta' subunit thereby facilitating its interaction with the beta and alpha subunits. The polypeptide is DNA-directed RNA polymerase subunit omega (Clostridium botulinum (strain Loch Maree / Type A3)).